The primary structure comprises 309 residues: uncharacterized protein (309 aa).

The HTH lysR-type domain occupies 1–60; the sequence is MKPLLDVLMILDALEKEGSFAAASAKLYKTPSALSYTVHKLESDLNIQLLDRSGHRAKFT. A DNA-binding region (H-T-H motif) is located at residues 20–39; that stretch reads FAAASAKLYKTPSALSYTVH.

Belongs to the LysR transcriptional regulatory family.

This is an uncharacterized protein from Escherichia coli (strain K12).